Consider the following 123-residue polypeptide: Small ribosomal subunit protein uS12 (123 aa).

At Asp89 the chain carries 3-methylthioaspartic acid.

Belongs to the universal ribosomal protein uS12 family. As to quaternary structure, part of the 30S ribosomal subunit. Contacts proteins S8 and S17. May interact with IF1 in the 30S initiation complex.

Its function is as follows. With S4 and S5 plays an important role in translational accuracy. In terms of biological role, interacts with and stabilizes bases of the 16S rRNA that are involved in tRNA selection in the A site and with the mRNA backbone. Located at the interface of the 30S and 50S subunits, it traverses the body of the 30S subunit contacting proteins on the other side and probably holding the rRNA structure together. The combined cluster of proteins S8, S12 and S17 appears to hold together the shoulder and platform of the 30S subunit. This chain is Small ribosomal subunit protein uS12, found in Rhizobium meliloti (strain 1021) (Ensifer meliloti).